The sequence spans 1729 residues: Zinc finger CCCH domain-containing protein 13 (1729 aa).

Disordered regions lie at residues 1–40 and 57–156; these read MSKI…TTET and CRFI…NGDI. Positions 10 to 23 are enriched in polar residues; it reads VENTKTISESTSRR. Residues 36–64 form a C3H1-type zinc finger; it reads STTETQCRNWLKTGSCLYGNTCRFIHGPS. A phosphoserine mark is found at serine 64 and serine 77. Over residues 76–136 the composition is skewed to basic and acidic residues; sequence RSPERPTGDL…IKIVKERTPE (61 aa). The stretch at 162–196 forms a coiled coil; it reads HELSLEMKRQKIQRELMKLEQENMDKREEIIIQKE. A Glycyl lysine isopeptide (Lys-Gly) (interchain with G-Cter in SUMO2) cross-link involves residue lysine 179. The span at 182 to 193 shows a compositional bias: basic and acidic residues; it reads QENMDKREEIII. Disordered regions lie at residues 182 to 528 and 581 to 1527; these read QENM…IRDV and DVYQ…PISD. Phosphoserine occurs at positions 198, 207, 209, and 211. Positions 204–213 are enriched in low complexity; sequence SKLSPSPSLR. Residues 214–224 are compositionally biased toward basic residues; that stretch reads KSSKSPKRKSS. A Phosphoserine modification is found at serine 242. The segment covering 245-254 has biased composition (polar residues); that stretch reads LDQQRNSKGN. Threonine 263 bears the Phosphothreonine mark. Residue serine 265 is modified to Phosphoserine. Residues 283 to 315 show a composition bias toward basic and acidic residues; that stretch reads KYKVKDRIEEKPRDGKDRGRDFEKQREKRDKPR. 4 positions are modified to phosphoserine: serine 316, serine 318, serine 324, and serine 327. Low complexity predominate over residues 321 to 345; it reads QHHSPLSSRHHSSSSQSGSSIQRHS. Threonine 353 and threonine 363 each carry phosphothreonine. The span at 358–368 shows a compositional bias: polar residues; it reads YQRTLTPSLRR. Phosphoserine is present on residues serine 369, serine 371, and serine 380. Composition is skewed to basic and acidic residues over residues 393–528 and 581–636; these read PMRE…IRDV and DVYQ…EKGS. Polar residues predominate over residues 639–654; it reads TRGSQMDSHSSGSNYH. Positions 655–701 are enriched in basic and acidic residues; sequence DSWETRSSYPERDRYPERDTRDPARDSSFERRHGERDRRDNRERDQR. Position 704 is a phosphoserine (serine 704). Residues 706–865 are a coiled coil; sequence IRHQGRSEEL…KERERQREWE (160 aa). The span at 710–897 shows a compositional bias: basic and acidic residues; it reads GRSEELERDE…IPRDSHEERK (188 aa). A phosphoserine mark is found at serine 907, serine 909, serine 913, serine 921, serine 924, serine 929, serine 949, serine 951, and serine 953. Positions 920-938 are enriched in basic and acidic residues; that stretch reads HSPDSDTYHSGDDKNEKHR. A compositionally biased stretch (basic and acidic residues) spans 957-1035; it reads LTEDRQGRWK…GSDRAHDEKK (79 aa). The residue at position 958 (threonine 958) is a Phosphothreonine. Over residues 1036–1046 the composition is skewed to basic residues; the sequence is KAKAPKKPVKK. Basic and acidic residues predominate over residues 1047–1065; that stretch reads KKEEDVGVERGNLETHEDS. A phosphoserine mark is found at serine 1069, serine 1086, serine 1090, and serine 1093. Residues 1072–1086 are compositionally biased toward basic residues; it reads KGQKKKNIEKKRKRS. The residue at position 1109 (threonine 1109) is a Phosphothreonine. 2 stretches are compositionally biased toward basic and acidic residues: residues 1114 to 1137 and 1149 to 1159; these read IKEE…KKEN and PDRTEGLEAEH. Composition is skewed to low complexity over residues 1160 to 1176 and 1184 to 1218; these read TAAT…LSSL and AAAS…TNGS. Positions 1228-1253 are enriched in basic and acidic residues; the sequence is ARGEKVEVSHVTLEDTPHRKLVDQKR. 4 positions are modified to phosphoserine: serine 1256, serine 1259, serine 1273, and serine 1275. Positions 1278-1288 are enriched in basic and acidic residues; it reads SAHRSGDDQGS. Position 1295 is a phosphoserine (serine 1295). Composition is skewed to basic and acidic residues over residues 1296–1351 and 1359–1440; these read GSRD…DRQV and DSRD…ERTF. Serine 1427, serine 1443, serine 1447, serine 1467, serine 1470, serine 1499, and serine 1526 each carry phosphoserine. Basic and acidic residues-rich tracts occupy residues 1447-1482 and 1490-1499; these read SGKR…DRDL and DVSKAERTES.

It belongs to the ZC3H13 family. Component of the WMM complex, a N6-methyltransferase complex composed of a catalytic subcomplex, named MAC, and of an associated subcomplex, named MACOM. The MAC subcomplex is composed of METTL3 and METTL14. The MACOM subcomplex is composed of WTAP, ZC3H13, CBLL1/HAKAI, VIRMA, and, in some cases of RBM15 (RBM15 or RBM15B). Also a component of a MACOM-like complex, named WTAP complex, composed of WTAP, ZC3H13, CBLL1/HAKAI, VIRMA, RBM15, BCLAF1 and THRAP3.

The protein localises to the nucleus speckle. It is found in the nucleus. It localises to the nucleoplasm. Its function is as follows. Associated component of the WMM complex, a complex that mediates N6-methyladenosine (m6A) methylation of RNAs, a modification that plays a role in the efficiency of mRNA splicing and RNA processing. Acts as a key regulator of m6A methylation by promoting m6A methylation of mRNAs at the 3'-UTR. Controls embryonic stem cells (ESCs) pluripotency via its role in m6A methylation. In the WMM complex, anchors component of the MACOM subcomplex in the nucleus. Also required for bridging WTAP to the RNA-binding component RBM15 (RBM15 or RBM15B). This is Zinc finger CCCH domain-containing protein 13 from Mus musculus (Mouse).